The chain runs to 121 residues: MSKFTSRELRARRHRRLRGQLSGTPERPRLNVFRSGLNIYAQVIDDLAGHTLVSASTIDTELRGSLGEQRKLEQAHSVGKAVAERARAAGITKVVFDRGGYKYHGRVKAVAEGAREGGLEF.

It belongs to the universal ribosomal protein uL18 family. In terms of assembly, part of the 50S ribosomal subunit; part of the 5S rRNA/L5/L18/L25 subcomplex. Contacts the 5S and 23S rRNAs.

This is one of the proteins that bind and probably mediate the attachment of the 5S RNA into the large ribosomal subunit, where it forms part of the central protuberance. The polypeptide is Large ribosomal subunit protein uL18 (Herpetosiphon aurantiacus (strain ATCC 23779 / DSM 785 / 114-95)).